The chain runs to 1515 residues: Adhesion G protein-coupled receptor L1 (1515 aa).

The signal sequence occupies residues 1-24 (MARLAAALWSLCVTTVLVTSATQG). Over 25-857 (LSRAGLPFGL…EIYQGRINEL (833 aa)) the chain is Extracellular. Residues 40 to 129 (ACEGYPIELR…KYLEVQYDCV (90 aa)) enclose the SUEL-type lectin domain. 5 disulfides stabilise this stretch: cysteine 41–cysteine 71, cysteine 50–cysteine 128, cysteine 83–cysteine 115, cysteine 96–cysteine 102, and cysteine 140–cysteine 322. Alpha-L-rhamnose is bound at residue glutamate 42. Asparagine 98 is a glycosylation site (N-linked (GlcNAc...) asparagine). Alpha-L-rhamnose is bound at residue 117–120 (GTYK). Residues 139-398 (VCPGTLQKVL…VVRYSLEFGP (260 aa)) enclose the Olfactomedin-like domain. The disordered stretch occupies residues 400 to 468 (DPSAGPATSP…APAPSTRRPP (69 aa)). Positions 405–441 (PATSPPLSTTTTARPTPLTSTASPAATTPLRRAPLTT) are enriched in low complexity. Positions 453–468 (DLPPATAPAPSTRRPP) are enriched in pro residues. Disulfide bonds link cysteine 480/cysteine 515 and cysteine 503/cysteine 532. 6 N-linked (GlcNAc...) asparagine glycosylation sites follow: asparagine 531, asparagine 640, asparagine 741, asparagine 800, asparagine 805, and asparagine 826. The GAIN-B domain maps to 669–850 (PARFLAAKQN…AVLMAHREIY (182 aa)). Intrachain disulfides connect cysteine 801-cysteine 832 and cysteine 820-cysteine 834. The segment at 801 to 850 (CSFWNYSERSMLGYWSTQGCRLVESNKTHTTCACSHLTNFAVLMAHREIY) is GPS. A helical transmembrane segment spans residues 858 to 878 (LLSVITWVGIVISLVCLAICI). Topologically, residues 879–892 (STFCFLRGLQTDRN) are cytoplasmic. Residues 893-913 (TIHKNLCINLFLAELLFLVGI) form a helical membrane-spanning segment. The Extracellular segment spans residues 914 to 919 (DKTQYE). Residues 920-940 (VACPIFAGLLHYFFLAAFSWL) traverse the membrane as a helical segment. Residues 941–964 (CLEGVHLYLLLVEVFESEYSRTKY) lie on the Cytoplasmic side of the membrane. A helical membrane pass occupies residues 965–985 (YYLGGYCFPALVVGIAAAIDY). Over 986-1001 (RSYGTEKACWLRVDNY) the chain is Extracellular. A helical transmembrane segment spans residues 1002-1022 (FIWSFIGPVSFVIVVNLVFLM). Residues 1023–1049 (VTLHKMIRSSSVLKPDSSRLDNIKSWA) lie on the Cytoplasmic side of the membrane. Residues 1050–1070 (LGAIALLFLLGLTWAFGLLFI) form a helical membrane-spanning segment. The Extracellular portion of the chain corresponds to 1071–1074 (NKES). Residues 1075–1095 (VVMAYLFTTFNAFQGVFIFVF) form a helical membrane-spanning segment. Topologically, residues 1096-1515 (HCALQKKVHK…DGQMQLVTSL (420 aa)) are cytoplasmic. Positions 1144–1184 (TQVPGQGRHIHQVSLGPRGRSALPESQKDPGGQSGPGDPLT) are disordered. Residue arginine 1237 is modified to Omega-N-methylarginine. Serine 1263 carries the phosphoserine modification. 4 disordered regions span residues 1291–1316 (FNNSYSLRSGDFPPGDGGPEPPRGRN), 1337–1369 (RGASGGAKGPPPEPPVPPVPGVSEDEAGGPGGA), 1401–1470 (ESES…SRPP), and 1492–1515 (YLAAPSLEGPGPDGDGQMQLVTSL). Composition is skewed to pro residues over residues 1345-1356 (GPPPEPPVPPVP) and 1449-1461 (ALPPPPPAPPGPP). Phosphoserine is present on residues serine 1497 and serine 1514.

This sequence belongs to the G-protein coupled receptor 2 family. Adhesion G-protein coupled receptor (ADGR) subfamily. As to quaternary structure, forms a heterodimer, consisting of a large extracellular region (p120) non-covalently linked to a seven-transmembrane moiety (p85). Interacts with syntaxin and with proteins of the SHANK family via the PDZ domain. Isoform 2 interacts with TENM2. Interacts (via extracellular domain) with FLRT1, FLRT2 and FLRT3 (via extracellular domain). Post-translationally, autoproteolytically cleaved into 2 subunits, an extracellular subunit and a seven-transmembrane subunit. This proteolytic processing takes place early in the biosynthetic pathway, either in the endoplasmic reticulum or in the early compartment of the Golgi apparatus. As to expression, expressed in the brain (at protein level). Brain specific distribution but low levels are also detected in most tissues.

It localises to the cell membrane. The protein localises to the cell projection. The protein resides in the axon. Its subcellular location is the growth cone. It is found in the synapse. It localises to the presynaptic cell membrane. The protein localises to the synaptosome. Its function is as follows. Calcium-independent receptor of high affinity for alpha-latrotoxin, an excitatory neurotoxin present in black widow spider venom which triggers massive exocytosis from neurons and neuroendocrine cells. Receptor probably implicated in the regulation of exocytosis. In terms of biological role, receptor for TENM2 that mediates heterophilic synaptic cell-cell contact and postsynaptic specialization. The chain is Adhesion G protein-coupled receptor L1 from Rattus norvegicus (Rat).